The sequence spans 94 residues: DNA-binding protein HU (94 aa).

Residues 55-94 (RAERPGRNPKTGEPIMIAASNNPSFKPGKALKDAVKSSAG) are disordered. The span at 84 to 94 (ALKDAVKSSAG) shows a compositional bias: basic and acidic residues.

This sequence belongs to the bacterial histone-like protein family.

Its function is as follows. Histone-like DNA-binding protein which is capable of wrapping DNA to stabilize it, and thus to prevent its denaturation under extreme environmental conditions. The chain is DNA-binding protein HU (hup) from Xylella fastidiosa (strain Temecula1 / ATCC 700964).